Here is a 376-residue protein sequence, read N- to C-terminus: Queuine tRNA-ribosyltransferase (376 aa).

The active-site Proton acceptor is the D90. Residues 90–94 (DSGGF), D144, Q193, and G220 each bind substrate. An RNA binding region spans residues 251-257 (GVGTPED). D270 functions as the Nucleophile in the catalytic mechanism. The segment at 275–279 (TRNAR) is RNA binding; important for wobble base 34 recognition. Residues C308, C310, C313, and H339 each contribute to the Zn(2+) site.

Belongs to the queuine tRNA-ribosyltransferase family. Homodimer. Within each dimer, one monomer is responsible for RNA recognition and catalysis, while the other monomer binds to the replacement base PreQ1. Zn(2+) is required as a cofactor.

The enzyme catalyses 7-aminomethyl-7-carbaguanine + guanosine(34) in tRNA = 7-aminomethyl-7-carbaguanosine(34) in tRNA + guanine. The protein operates within tRNA modification; tRNA-queuosine biosynthesis. Its function is as follows. Catalyzes the base-exchange of a guanine (G) residue with the queuine precursor 7-aminomethyl-7-deazaguanine (PreQ1) at position 34 (anticodon wobble position) in tRNAs with GU(N) anticodons (tRNA-Asp, -Asn, -His and -Tyr). Catalysis occurs through a double-displacement mechanism. The nucleophile active site attacks the C1' of nucleotide 34 to detach the guanine base from the RNA, forming a covalent enzyme-RNA intermediate. The proton acceptor active site deprotonates the incoming PreQ1, allowing a nucleophilic attack on the C1' of the ribose to form the product. After dissociation, two additional enzymatic reactions on the tRNA convert PreQ1 to queuine (Q), resulting in the hypermodified nucleoside queuosine (7-(((4,5-cis-dihydroxy-2-cyclopenten-1-yl)amino)methyl)-7-deazaguanosine). This chain is Queuine tRNA-ribosyltransferase, found in Campylobacter concisus (strain 13826).